The following is a 595-amino-acid chain: Elongation factor 4 (595 aa).

Positions 1-183 (MNVRNFSIIA…AIVERIPPPP (183 aa)) constitute a tr-type G domain. Residues 13–18 (DHGKST) and 130–133 (NKID) each bind GTP.

Belongs to the TRAFAC class translation factor GTPase superfamily. Classic translation factor GTPase family. LepA subfamily.

It localises to the cell membrane. The enzyme catalyses GTP + H2O = GDP + phosphate + H(+). In terms of biological role, required for accurate and efficient protein synthesis under certain stress conditions. May act as a fidelity factor of the translation reaction, by catalyzing a one-codon backward translocation of tRNAs on improperly translocated ribosomes. Back-translocation proceeds from a post-translocation (POST) complex to a pre-translocation (PRE) complex, thus giving elongation factor G a second chance to translocate the tRNAs correctly. Binds to ribosomes in a GTP-dependent manner. The chain is Elongation factor 4 from Deinococcus geothermalis (strain DSM 11300 / CIP 105573 / AG-3a).